Here is a 151-residue protein sequence, read N- to C-terminus: Small ribosomal subunit protein uS13 (151 aa).

This sequence belongs to the universal ribosomal protein uS13 family. As to quaternary structure, part of the 30S ribosomal subunit. Forms a loose heterodimer with protein S19. Forms two bridges to the 50S subunit in the 70S ribosome.

In terms of biological role, located at the top of the head of the 30S subunit, it contacts several helices of the 16S rRNA. In the 70S ribosome it contacts the 23S rRNA (bridge B1a) and protein L5 of the 50S subunit (bridge B1b), connecting the 2 subunits; these bridges are implicated in subunit movement. The chain is Small ribosomal subunit protein uS13 from Hyperthermus butylicus (strain DSM 5456 / JCM 9403 / PLM1-5).